A 363-amino-acid polypeptide reads, in one-letter code: Phosphoserine aminotransferase (363 aa).

L-glutamate is bound at residue Arg42. Residues 76-77, Trp101, Thr151, Asp170, and Gln193 contribute to the pyridoxal 5'-phosphate site; that span reads AS. Lys194 carries the post-translational modification N6-(pyridoxal phosphate)lysine. Position 234 to 235 (234 to 235) interacts with pyridoxal 5'-phosphate; that stretch reads NT.

It belongs to the class-V pyridoxal-phosphate-dependent aminotransferase family. SerC subfamily. As to quaternary structure, homodimer. The cofactor is pyridoxal 5'-phosphate.

It is found in the cytoplasm. The catalysed reaction is O-phospho-L-serine + 2-oxoglutarate = 3-phosphooxypyruvate + L-glutamate. It catalyses the reaction 4-(phosphooxy)-L-threonine + 2-oxoglutarate = (R)-3-hydroxy-2-oxo-4-phosphooxybutanoate + L-glutamate. Its pathway is amino-acid biosynthesis; L-serine biosynthesis; L-serine from 3-phospho-D-glycerate: step 2/3. Catalyzes the reversible conversion of 3-phosphohydroxypyruvate to phosphoserine and of 3-hydroxy-2-oxo-4-phosphonooxybutanoate to phosphohydroxythreonine. In Listeria monocytogenes serovar 1/2a (strain ATCC BAA-679 / EGD-e), this protein is Phosphoserine aminotransferase.